The sequence spans 299 residues: Acetylglutamate kinase (299 aa).

Residues 72–73, R94, and N196 contribute to the substrate site; that span reads GG.

The protein belongs to the acetylglutamate kinase family. ArgB subfamily.

It localises to the cytoplasm. It carries out the reaction N-acetyl-L-glutamate + ATP = N-acetyl-L-glutamyl 5-phosphate + ADP. It participates in amino-acid biosynthesis; L-arginine biosynthesis; N(2)-acetyl-L-ornithine from L-glutamate: step 2/4. Functionally, catalyzes the ATP-dependent phosphorylation of N-acetyl-L-glutamate. The polypeptide is Acetylglutamate kinase (Burkholderia vietnamiensis (strain G4 / LMG 22486) (Burkholderia cepacia (strain R1808))).